Here is a 278-residue protein sequence, read N- to C-terminus: Nucleotide-binding protein Tbd_0529 (278 aa).

ATP is bound at residue Gly-8 to Ser-15. Asp-57–Ser-60 serves as a coordination point for GTP.

It belongs to the RapZ-like family.

Its function is as follows. Displays ATPase and GTPase activities. This is Nucleotide-binding protein Tbd_0529 from Thiobacillus denitrificans (strain ATCC 25259 / T1).